We begin with the raw amino-acid sequence, 465 residues long: Crh-like protein ARB_05253 (465 aa).

The first 21 residues, 1–21 (MKLSLAAALLGALAVSAQTST), serve as a signal peptide directing secretion. In terms of domain architecture, GH16 spans 22–223 (ECNPLKQKCP…WAGGETDFSK (202 aa)). Cys23 and Cys30 are disulfide-bonded. The Nucleophile role is filled by Glu114. The active-site Proton donor is Glu118. The chitin site is built by Glu118, Trp200, and Thr211. 2 disordered regions span residues 261–325 (GQVN…STMT) and 339–442 (TGTG…PGST). N-linked (GlcNAc...) asparagine glycosylation occurs at Asn264. Over residues 277-287 (SSTLPSSPSTS) the composition is skewed to low complexity. Positions 304-325 (QAPNTGSSPSNTLTNGPSSTMT) are enriched in polar residues. Composition is skewed to low complexity over residues 339–348 (TGTGGVVTPT), 361–376 (TSRS…SASS), and 383–397 (MTTS…TGTG). Residue Ser441 is the site of GPI-anchor amidated serine attachment. Residues 442-465 (TGAIHSVSNALLLSFCAIAAWALV) constitute a propeptide, removed in mature form.

This sequence belongs to the glycosyl hydrolase 16 family. CRH1 subfamily. The GPI-anchor is attached to the protein in the endoplasmic reticulum and serves to target the protein to the cell surface. There, the glucosamine-inositol phospholipid moiety is cleaved off and the GPI-modified mannoprotein is covalently attached via its lipidless GPI glycan remnant to the 1,6-beta-glucan of the outer cell wall layer.

It is found in the secreted. Its subcellular location is the cell wall. The protein localises to the membrane. It carries out the reaction Random endo-hydrolysis of N-acetyl-beta-D-glucosaminide (1-&gt;4)-beta-linkages in chitin and chitodextrins.. Its function is as follows. Dual chitinase/transglycosylase that plays a role in cell wall architecture. Chitinase and transglycosylase activities are coupled. Required for the polysaccharide cross-linking at the septa and the cell wall. More specifically, transfers chitin to 1,6-beta-glucan in the cell wall. This chain is Crh-like protein ARB_05253, found in Arthroderma benhamiae (strain ATCC MYA-4681 / CBS 112371) (Trichophyton mentagrophytes).